A 154-amino-acid chain; its full sequence is Myoglobin (154 aa).

A Globin domain is found at 2 to 148 (GLSDGEWQLV…FRNDMAAKYK (147 aa)). Position 4 is a phosphoserine (serine 4). Nitrite is bound at residue histidine 65. Histidine 65 contributes to the O2 binding site. Threonine 68 carries the post-translational modification Phosphothreonine. Histidine 94 lines the heme b pocket.

The protein belongs to the globin family. In terms of assembly, monomeric.

Its subcellular location is the cytoplasm. It is found in the sarcoplasm. It carries out the reaction Fe(III)-heme b-[protein] + nitric oxide + H2O = Fe(II)-heme b-[protein] + nitrite + 2 H(+). The catalysed reaction is H2O2 + AH2 = A + 2 H2O. In terms of biological role, monomeric heme protein which primary function is to store oxygen and facilitate its diffusion within muscle tissues. Reversibly binds oxygen through a pentacoordinated heme iron and enables its timely and efficient release as needed during periods of heightened demand. Depending on the oxidative conditions of tissues and cells, and in addition to its ability to bind oxygen, it also has a nitrite reductase activity whereby it regulates the production of bioactive nitric oxide. Under stress conditions, like hypoxia and anoxia, it also protects cells against reactive oxygen species thanks to its pseudoperoxidase activity. In Sapajus apella (Brown-capped capuchin), this protein is Myoglobin (MB).